We begin with the raw amino-acid sequence, 210 residues long: Glycerol-3-phosphate acyltransferase (210 aa).

The next 6 membrane-spanning stretches (helical) occupy residues Leu8–Thr28, Gly56–Ala76, Thr87–Phe107, Thr119–Ala139, Ile144–Ser164, and Gly165–Ala185.

The protein belongs to the PlsY family. In terms of assembly, probably interacts with PlsX.

It is found in the cell inner membrane. The enzyme catalyses an acyl phosphate + sn-glycerol 3-phosphate = a 1-acyl-sn-glycero-3-phosphate + phosphate. It functions in the pathway lipid metabolism; phospholipid metabolism. Its function is as follows. Catalyzes the transfer of an acyl group from acyl-phosphate (acyl-PO(4)) to glycerol-3-phosphate (G3P) to form lysophosphatidic acid (LPA). This enzyme utilizes acyl-phosphate as fatty acyl donor, but not acyl-CoA or acyl-ACP. This Gluconobacter oxydans (strain 621H) (Gluconobacter suboxydans) protein is Glycerol-3-phosphate acyltransferase.